The chain runs to 321 residues: Pirin-like protein 2 (321 aa).

4 residues coordinate Fe cation: histidine 88, histidine 90, histidine 132, and glutamate 134.

This sequence belongs to the pirin family. As to quaternary structure, interacts with RD21A, RD21B and XCP2.

The protein resides in the cytoplasm. It is found in the cytosol. It localises to the nucleus. Its function is as follows. Involved in susceptibility to the bacterial plant pathogen Ralstonia solanacearum. Stabilizes the xylem cysteine protease XCP2 by blocking its autolysis. This Arabidopsis thaliana (Mouse-ear cress) protein is Pirin-like protein 2.